Here is a 1345-residue protein sequence, read N- to C-terminus: DNA-directed RNA polymerase subunit beta (1345 aa).

Belongs to the RNA polymerase beta chain family. As to quaternary structure, the RNAP catalytic core consists of 2 alpha, 1 beta, 1 beta' and 1 omega subunit. When a sigma factor is associated with the core the holoenzyme is formed, which can initiate transcription.

The enzyme catalyses RNA(n) + a ribonucleoside 5'-triphosphate = RNA(n+1) + diphosphate. Its function is as follows. DNA-dependent RNA polymerase catalyzes the transcription of DNA into RNA using the four ribonucleoside triphosphates as substrates. The chain is DNA-directed RNA polymerase subunit beta from Shewanella sp. (strain MR-4).